The sequence spans 724 residues: Protein-glutamine gamma-glutamyltransferase 5 (724 aa).

N-acetylalanine is present on alanine 2. Catalysis depends on residues cysteine 283, histidine 342, and aspartate 365. 4 residues coordinate Ca(2+): asparagine 405, aspartate 407, glutamate 453, and glutamate 458. 2 stretches are compositionally biased toward polar residues: residues 473 to 486 (RSQG…NPFS) and 495 to 505 (ARSPDSPSLQP). The interval 473–505 (RSQGPHQANSNPFSSVPPRHNSARSPDSPSLQP) is disordered.

This sequence belongs to the transglutaminase superfamily. Transglutaminase family. It depends on Ca(2+) as a cofactor.

It localises to the cytoplasm. It catalyses the reaction L-glutaminyl-[protein] + L-lysyl-[protein] = [protein]-L-lysyl-N(6)-5-L-glutamyl-[protein] + NH4(+). Catalyzes the cross-linking of proteins and the conjugation of polyamines to proteins. Contributes to the formation of the cornified cell envelope of keratinocytes. This is Protein-glutamine gamma-glutamyltransferase 5 (Tgm5) from Mus musculus (Mouse).